A 38-amino-acid chain; its full sequence is Small ribosomal subunit protein uS12c (38 aa).

The interval 1 to 26 (MPTIQQLIRNARQPIENRKKSPALRG) is disordered.

The protein belongs to the universal ribosomal protein uS12 family. Part of the 30S ribosomal subunit.

Its subcellular location is the plastid. The protein resides in the chloroplast. In terms of biological role, with S4 and S5 plays an important role in translational accuracy. Located at the interface of the 30S and 50S subunits. The sequence is that of Small ribosomal subunit protein uS12c (rps12) from Pinus contorta (Shore pine).